Reading from the N-terminus, the 254-residue chain is UPF0246 protein Fphi_1075 (254 aa).

It belongs to the UPF0246 family.

The sequence is that of UPF0246 protein Fphi_1075 from Francisella philomiragia subsp. philomiragia (strain ATCC 25017 / CCUG 19701 / FSC 153 / O#319-036).